A 544-amino-acid polypeptide reads, in one-letter code: Major royal jelly protein 3 (544 aa).

Positions 1–20 are cleaved as a signal peptide; sequence MTKWLLLVVCLGIACQDVTS. An N-linked (GlcNAc...) asparagine glycan is attached at Asn-183. The disordered stretch occupies residues 421-544; the sequence is RYHNQNAGNQ…NQVHHSSKLH (124 aa). Repeat copies occupy residues 424–428, 429–433, 434–438, 439–443, 444–448, 449–453, 454–458, 459–463, 464–468, 469–473, 474–478, 479–483, 484–488, 489–493, 494–498, 499–503, 504–508, 509–513, 514–518, and 519–523. Composition is skewed to low complexity over residues 424 to 460, 468 to 510, and 518 to 530; these read NQNA…GNRQ, NKQN…GNRQ, and NRQN…QNDN. The 23 X 5 AA tandem repeats of [NKR]-[RQ]-N-[AGD]-[DNG] stretch occupies residues 424 to 523; sequence NQNAGNQNAD…KRNGNRQNDN (100 aa). One copy of the 21; half-length repeat lies at 524–525; the sequence is QN. Repeat copies occupy residues 526 to 530 and 531 to 535.

The protein belongs to the major royal jelly protein family. As to quaternary structure, homoligomer; in the absence of RNA, assembles into a higher-order oligomeric form, composed of around 20 monomer units. Found in and secreted from the hypopharyngeal glands of the worker honey bee (at protein level); expression peaks at 12 days post eclosion. Expressed in the brains of worker bees. Expressed in the brains of adult worker bees peaking at 12 days post eclosion (at protein level). Expressed in the spermatheca of adult queen bees (at protein level); Expression levels are higher in mated queens than in virgin queens. Expressed in queen bee ovaries and male drone testes. Expression in the head of forager worker bees is lower than in the heads of nurse worker bees.

Its subcellular location is the secreted. Functionally, abundant protein component of royal jelly, a substance produced in the hypopharyngeal gland containing proteins, free amino acids, fatty acids, sugars and other nutrients, which is fed to developing larvae by worker nurse bees. Major royal jelly proteins (MRJPs) are high in essential amino acids and probably have a nutritional function in larval food. All larvae are fed some royal jelly (also known as worker jelly) early in their development but it forms the principal source of nutrition for larvae destined to become queen bees. Secreted RNA-binding protein required to concentrate, stabilize and enhance environmental RNA bioavailability in the honey bee royal jelly. Acts as a RNA-aggregating protein: binds 18 nucleotides and longer single- and double-stranded RNA (ssRNA and dsRNA, respectively) in a non-specific manner. RNA-binding drives super-order assembly of oligomers into extracellular ribonucleoprotein granules that concentrate, protect and enhance RNA uptake granules, facilitating RNA transfer among bees. Produced in the spermatheca of adult queen bees, along with other major royal jelly proteins, where it may act as a nutrient supply for sperm stored by mated queens, or be involved in energy metabolism. This chain is Major royal jelly protein 3, found in Apis mellifera (Honeybee).